We begin with the raw amino-acid sequence, 433 residues long: Phosphoribosylamine--glycine ligase (433 aa).

The ATP-grasp domain occupies 111–317; it reads EFMARNNIKG…FVDICEAIVD (207 aa). 138–194 contacts ATP; sequence EDNPDVVVKPAGLTGGKGVKVMGEHMHTLEEAREYVKSVLEHDRVVIEERLKGEEVT. Glutamine 275, glutamate 287, and asparagine 289 together coordinate Mg(2+). Mn(2+) contacts are provided by glutamine 275, glutamate 287, and asparagine 289.

This sequence belongs to the GARS family. Mg(2+) serves as cofactor. Requires Mn(2+) as cofactor.

It catalyses the reaction 5-phospho-beta-D-ribosylamine + glycine + ATP = N(1)-(5-phospho-beta-D-ribosyl)glycinamide + ADP + phosphate + H(+). It functions in the pathway purine metabolism; IMP biosynthesis via de novo pathway; N(1)-(5-phospho-D-ribosyl)glycinamide from 5-phospho-alpha-D-ribose 1-diphosphate: step 2/2. This Methanocella arvoryzae (strain DSM 22066 / NBRC 105507 / MRE50) protein is Phosphoribosylamine--glycine ligase.